A 720-amino-acid chain; its full sequence is Chloroplastic group IIA intron splicing facilitator CRS1, chloroplastic (720 aa).

A chloroplast-targeting transit peptide spans 1–77 (MRNGINILSY…DQFRENRGVS (77 aa)). A coiled-coil region spans residues 131–159 (KAMKKIVRNVEKLDEDSDSEETQMDDLSE). CRM domains lie at 205–301 (LILD…EGQD) and 359–456 (AKLT…EVAD). Coiled coils occupy residues 447–477 (KDFL…TKRE) and 517–553 (RNLE…NMEL). The CRM 3 domain maps to 570–670 (EILTNEEREC…KNYKRPSSKL (101 aa)).

As to quaternary structure, homodimer. Interacts with RNA. Part of large ribonucleo-protein complexes that include group IIA introns and CRS1.

The protein localises to the plastid. It is found in the chloroplast stroma. In terms of biological role, required for the splicing of group IIA introns in chloroplasts, by regulating the intron folding. Forms splicing particles with RNA. May also be involved in chloroplast protein translation. The chain is Chloroplastic group IIA intron splicing facilitator CRS1, chloroplastic from Arabidopsis thaliana (Mouse-ear cress).